The primary structure comprises 372 residues: MKYDLIIIGSGSVGAAAGYYATRAGLKVLMTDAHMPPHQQGSHHGDTRLIRHAYGEGEKYVPLVLRAQTLWDELSTHNEEPIFVRSGVVNLGPADSAFLANVARSAQQWQLNVERLDATALMTRWPEIRVPDNYIGLFEADSGFLRSELAITTWLRLAREAGCAQLFNSPVSHIHHDDNGVTIETSEGSYHASKALISAGTWVKALVPELPVQPVRKVFAWFKADGRYSTKNRFPAFTGEMPNGDQYYGFPAENDELKIGKHNGGQRIQAQEERKPFAAVASDGAEAFPFLRNVLPGIGGCLHGAACTYDNSPDEDFIIDTLPGHENTLVITGLSGHGFKFAPVLGEIAADFALGKTPSFDLTPFRLSRFSQ.

4-34 provides a ligand contact to FAD; sequence DLIIIGSGSVGAAAGYYATRAGLKVLMTDAH. The residue at position 307 (Cys-307) is an S-8alpha-FAD cysteine.

The protein belongs to the MSOX/MTOX family. MTOX subfamily. In terms of assembly, monomer. Requires FAD as cofactor.

It catalyses the reaction N(alpha)-methyl-L-tryptophan + O2 + H2O = L-tryptophan + formaldehyde + H2O2. Functionally, catalyzes the oxidative demethylation of N-methyl-L-tryptophan. The polypeptide is N-methyl-L-tryptophan oxidase (Salmonella heidelberg (strain SL476)).